Here is a 108-residue protein sequence, read N- to C-terminus: Nucleoid-associated protein Mpe_A2533 (108 aa).

Residues Thr-86–Phe-108 form a disordered region. Residues Pro-99–Phe-108 show a composition bias toward pro residues.

This sequence belongs to the YbaB/EbfC family. Homodimer.

It localises to the cytoplasm. The protein resides in the nucleoid. Functionally, binds to DNA and alters its conformation. May be involved in regulation of gene expression, nucleoid organization and DNA protection. The chain is Nucleoid-associated protein Mpe_A2533 from Methylibium petroleiphilum (strain ATCC BAA-1232 / LMG 22953 / PM1).